A 377-amino-acid polypeptide reads, in one-letter code: Pseudouridylate synthase RPUSD4, mitochondrial (377 aa).

A mitochondrion-targeting transit peptide spans 1 to 35; that stretch reads MAAPLLGSPGLQVLSMSSRTGKLFTPSSRSFCSRA. Residue aspartate 153 is part of the active site.

Belongs to the pseudouridine synthase RluA family. As to quaternary structure, interacts with 16S mt-rRNA, mt-tRNA(Phe) and mt-tRNA(Met). Forms a regulatory protein-RNA complex, consisting of RCC1L, NGRN, RPUSD3, RPUSD4, TRUB2, FASTKD2 and 16S mt-rRNA.

Its subcellular location is the mitochondrion matrix. It localises to the nucleus. It is found in the cytoplasm. The enzyme catalyses uridine in 5S rRNA = pseudouridine in 5S rRNA. It carries out the reaction a uridine in tRNA = a pseudouridine in tRNA. It catalyses the reaction a uridine in mRNA = a pseudouridine in mRNA. Functionally, catalyzes uridine to pseudouridine isomerization (pseudouridylation) of different mitochondrial RNA substrates. Acts on position 1397 in 16S mitochondrial ribosomal RNA (16S mt-rRNA). This modification is required for the assembly of 16S mt-rRNA into a functional mitochondrial ribosome. As a component of a functional protein-RNA module, consisting of RCC1L, NGRN, RPUSD3, RPUSD4, TRUB2, FASTKD2 and 16S mt-rRNA, controls 16S mt-rRNA abundance and is required for intra-mitochondrial translation. Acts on position 39 in mitochondrial tRNA(Phe). Also catalyzes pseudouridylation of mRNAs in nucleus: acts as a regulator of pre-mRNA splicing by mediating pseudouridylation of pre-mRNAs at locations associated with alternatively spliced regions. Pseudouridylation of pre-mRNAs near splice sites directly regulates mRNA splicing and mRNA 3'-end processing. The sequence is that of Pseudouridylate synthase RPUSD4, mitochondrial from Rattus norvegicus (Rat).